An 82-amino-acid chain; its full sequence is Small ribosomal subunit protein uS17 (82 aa).

Belongs to the universal ribosomal protein uS17 family. Part of the 30S ribosomal subunit.

Functionally, one of the primary rRNA binding proteins, it binds specifically to the 5'-end of 16S ribosomal RNA. This is Small ribosomal subunit protein uS17 from Pelobacter propionicus (strain DSM 2379 / NBRC 103807 / OttBd1).